We begin with the raw amino-acid sequence, 331 residues long: Retinol dehydrogenase 13 (331 aa).

N-acetylserine is present on serine 2. 45–51 (GANTGIG) contributes to the NADP(+) binding site. Serine 174 is a substrate binding site. The active-site Proton acceptor is tyrosine 200. At serine 323 the chain carries Phosphoserine.

The protein belongs to the short-chain dehydrogenases/reductases (SDR) family. Widely expressed. In the retina, detected in the inner segment of the photoreceptor cells. Weak signals are observed in a small population of inner nuclear neurons and the inner plexiform layer.

Its subcellular location is the mitochondrion inner membrane. The catalysed reaction is all-trans-retinol + NADP(+) = all-trans-retinal + NADPH + H(+). It participates in cofactor metabolism; retinol metabolism. In terms of biological role, retinol dehydrogenase with a clear preference for NADP. Oxidizes all-trans-retinol, but seems to reduce all-trans-retinal with much higher efficiency. Has no activity toward steroids. This is Retinol dehydrogenase 13 (RDH13) from Homo sapiens (Human).